The chain runs to 663 residues: Tripartite terminase subunit 3 (663 aa).

The short motif at 205-212 (VPRRHGKT) is the Walker A motif element. Residues 297–302 (LLIVDE) carry the Walker B motif motif. E302 (for ATPase activity) is an active-site residue. Active-site for nuclease activity residues include D455, E526, and D640.

Belongs to the herpesviridae TRM3 protein family. In terms of assembly, interacts with the terminase subunits TRM1 and TRM2. Interacts with portal protein.

Its subcellular location is the host nucleus. In terms of biological role, component of the molecular motor that translocates viral genomic DNA in empty capsid during DNA packaging. Forms a tripartite terminase complex together with TRM1 and TRM2 in the host cytoplasm. Once the complex reaches the host nucleus, it interacts with the capsid portal vertex. This portal forms a ring in which genomic DNA is translocated into the capsid. TRM3 carries an RNase H-like nuclease activity that plays an important role for the cleavage of concatemeric viral DNA into unit length genomes. This Human herpesvirus 7 (strain JI) (HHV-7) protein is Tripartite terminase subunit 3.